A 77-amino-acid polypeptide reads, in one-letter code: Liver-expressed antimicrobial peptide 2 (77 aa).

A signal peptide spans 1-22; that stretch reads MWHLKLFAVLVICLLLAVQVHG. The propeptide occupies 23–37; sequence SPIPELSSAKRRPRR. 2 disulfide bridges follow: Cys54/Cys65 and Cys60/Cys70.

This sequence belongs to the LEAP2 family.

It is found in the secreted. Functionally, has an antimicrobial activity. The polypeptide is Liver-expressed antimicrobial peptide 2 (LEAP2) (Sus scrofa (Pig)).